Reading from the N-terminus, the 310-residue chain is tRNA dimethylallyltransferase (310 aa).

Residue 13 to 20 (GPTASGKT) participates in ATP binding. Residue 15–20 (TASGKT) coordinates substrate. 4 interaction with substrate tRNA regions span residues 38-41 (DSAL), 162-166 (QRLSR), 243-248 (RCVGYR), and 276-283 (KRQITWLR).

It belongs to the IPP transferase family. As to quaternary structure, monomer. Mg(2+) serves as cofactor.

It carries out the reaction adenosine(37) in tRNA + dimethylallyl diphosphate = N(6)-dimethylallyladenosine(37) in tRNA + diphosphate. Catalyzes the transfer of a dimethylallyl group onto the adenine at position 37 in tRNAs that read codons beginning with uridine, leading to the formation of N6-(dimethylallyl)adenosine (i(6)A). This Aliivibrio fischeri (strain ATCC 700601 / ES114) (Vibrio fischeri) protein is tRNA dimethylallyltransferase.